Here is a 149-residue protein sequence, read N- to C-terminus: Tetracenomycin polyketide synthase protein TcmJ (149 aa).

The region spanning 51–117 is the Cupin type-2 domain; that stretch reads HIELAPGESV…NRGNVPARVV (67 aa). The interval 127–149 is disordered; it reads PELGHVDTEPVPNPAAAPPKVGG.

The tetracenomycin polyketide synthase (TCM PKS) is composed of a ketosynthase complex (TcmKL), an acyl carrier protein (TcmM), a cyclase (TcmN) and a probable second cyclase (TcmJ).

It carries out the reaction 10 malonyl-CoA + 8 H(+) = tetracenomycin F2 + 10 CO2 + 10 CoA + 2 H2O. Its pathway is antibiotic biosynthesis; tetracenomycin C biosynthesis. Involved in the biosynthesis of tetracenomycin C (TCM C). Part of a type II polyketide synthase (PKS) that catalyzes the synthesis of tetracenomycin F2 (TCM F2), a precursor of TCM C, from malonyl-CoA. TcmJ, while not absolutely required, greatly increases the tetracenomycin F2 production. It probably acts as a cyclase. In Streptomyces glaucescens, this protein is Tetracenomycin polyketide synthase protein TcmJ.